The primary structure comprises 87 residues: UPF0250 protein ESA_02696 (87 aa).

This sequence belongs to the UPF0250 family.

In Cronobacter sakazakii (strain ATCC BAA-894) (Enterobacter sakazakii), this protein is UPF0250 protein ESA_02696.